The chain runs to 429 residues: L-dopachrome tautomerase yellow-f (429 aa).

Positions 1 to 23 (MLSLDVLLLCAISGFQLLISADG) are cleaved as a signal peptide. N-linked (GlcNAc...) asparagine glycosylation is found at Asn-133 and Asn-372.

It belongs to the major royal jelly protein family.

It is found in the secreted. It carries out the reaction L-dopachrome = 5,6-dihydroxyindole-2-carboxylate. It functions in the pathway pigment biosynthesis; melanin biosynthesis. Its function is as follows. Tautomerization of L-dopachrome with decarboxylation to give 5,6-dihydroxyindole (DHI). Also catalyzes the tautomerization of the methyl ester of L-dopachrome and dopamine chrome. May play a role in melanization reactions during late pupal and adult stages. May play a role in melanization reactions during larval and early pupal stages. The sequence is that of L-dopachrome tautomerase yellow-f from Drosophila melanogaster (Fruit fly).